A 242-amino-acid chain; its full sequence is UDP-2,3-diacylglucosamine hydrolase (242 aa).

Residues D8, H10, D41, N79, and H114 each contribute to the Mn(2+) site. 79 to 80 serves as a coordination point for substrate; it reads NR. Substrate is bound by residues D122, K164, K167, and H195. Mn(2+) is bound by residues H195 and H197.

This sequence belongs to the LpxH family. It depends on Mn(2+) as a cofactor.

It is found in the cell inner membrane. It carries out the reaction UDP-2-N,3-O-bis[(3R)-3-hydroxytetradecanoyl]-alpha-D-glucosamine + H2O = 2-N,3-O-bis[(3R)-3-hydroxytetradecanoyl]-alpha-D-glucosaminyl 1-phosphate + UMP + 2 H(+). Its pathway is glycolipid biosynthesis; lipid IV(A) biosynthesis; lipid IV(A) from (3R)-3-hydroxytetradecanoyl-[acyl-carrier-protein] and UDP-N-acetyl-alpha-D-glucosamine: step 4/6. In terms of biological role, hydrolyzes the pyrophosphate bond of UDP-2,3-diacylglucosamine to yield 2,3-diacylglucosamine 1-phosphate (lipid X) and UMP by catalyzing the attack of water at the alpha-P atom. Involved in the biosynthesis of lipid A, a phosphorylated glycolipid that anchors the lipopolysaccharide to the outer membrane of the cell. The sequence is that of UDP-2,3-diacylglucosamine hydrolase from Vibrio cholerae serotype O1 (strain ATCC 39315 / El Tor Inaba N16961).